A 137-amino-acid polypeptide reads, in one-letter code: Large ribosomal subunit protein uL16c (137 aa).

Belongs to the universal ribosomal protein uL16 family. Part of the 50S ribosomal subunit.

The protein localises to the plastid. It localises to the chloroplast. This chain is Large ribosomal subunit protein uL16c, found in Vigna unguiculata (Cowpea).